Consider the following 323-residue polypeptide: Acetyl-coenzyme A carboxylase carboxyl transferase subunit alpha (323 aa).

The CoA carboxyltransferase C-terminal domain occupies Arg-39–Gln-293.

This sequence belongs to the AccA family. As to quaternary structure, acetyl-CoA carboxylase is a heterohexamer composed of biotin carboxyl carrier protein (AccB), biotin carboxylase (AccC) and two subunits each of ACCase subunit alpha (AccA) and ACCase subunit beta (AccD).

The protein resides in the cytoplasm. It carries out the reaction N(6)-carboxybiotinyl-L-lysyl-[protein] + acetyl-CoA = N(6)-biotinyl-L-lysyl-[protein] + malonyl-CoA. It functions in the pathway lipid metabolism; malonyl-CoA biosynthesis; malonyl-CoA from acetyl-CoA: step 1/1. Its function is as follows. Component of the acetyl coenzyme A carboxylase (ACC) complex. First, biotin carboxylase catalyzes the carboxylation of biotin on its carrier protein (BCCP) and then the CO(2) group is transferred by the carboxyltransferase to acetyl-CoA to form malonyl-CoA. The protein is Acetyl-coenzyme A carboxylase carboxyl transferase subunit alpha of Cupriavidus necator (strain ATCC 17699 / DSM 428 / KCTC 22496 / NCIMB 10442 / H16 / Stanier 337) (Ralstonia eutropha).